The sequence spans 1351 residues: Alpha-latrotoxin-Lh1a (1351 aa).

Residues serine 1–arginine 7 form the signal peptide. Residues arginine 4–arginine 7 are furin-like endopeptidase recognition region. Residues valine 226–leucine 245 form a helix H8 is the probable transmembrane region of the tetrameric pore inserted in the target cell membrane region. The cysteines at positions 401 and 1054 are disulfide-linked. 22 ANK repeats span residues leucine 446–glutamate 477, glutamine 478–glutamine 509, lysine 513–serine 542, phenylalanine 547–glutamate 577, aspartate 581–alanine 610, lysine 614–alanine 644, asparagine 648–valine 678, glycine 683–valine 711, glycine 717–glutamine 746, glutamate 750–alanine 779, serine 783–aspartate 812, asparagine 816–isoleucine 846, asparagine 850–threonine 879, threonine 883–isoleucine 912, aspartate 916–tryptophan 945, glutamate 959–alanine 991, isoleucine 992–valine 1019, lysine 1023–histidine 1052, asparagine 1056–arginine 1085, leucine 1089–isoleucine 1119, aspartate 1125–isoleucine 1154, and tyrosine 1158–arginine 1187. The segment at lysine 1184–arginine 1187 is furin-like endopeptidase recognition region. The propeptide occupies glutamate 1188–serine 1351.

This sequence belongs to the cationic peptide 01 (latrotoxin) family. 03 (alpha-latrotoxin) subfamily. As to quaternary structure, homotetramer in membranes. In terms of processing, processed by furin-like proteases at both the N- and C-termini. As to expression, expressed in venom gland, cephalothorax, and abdomen tissues from both males and females.

Its subcellular location is the secreted. The protein resides in the target cell membrane. In terms of biological role, presynaptic neurotoxin that causes massive release of neurotransmitters from vertebrate (but not invertebrate) nerve terminals and endocrine cells via a complex mechanism involving activation of receptor(s) and toxin insertion into the plasma membrane with subsequent pore formation. Binds to neurexin-1-alpha (NRXN1) in a calcium dependent manner, adhesion G protein-coupled receptor L1 (ADGRL1, also termed latrophilin-1 and calcium-independent receptor of latrotoxin (CIRL)), and receptor-type tyrosine-protein phosphatase S (PTPRS), also termed PTP sigma. NRXN1 and PTPRS are suggested to provide a platform for binding and subsequent pore formation events. In contrast, binding to ADGRL1 does not involve oligomerization and channel formation, but direct downstream stimulation of the synaptic fusion machinery. Induces rapid muscle contracture and loss of twitch tension when added to the isolated and indirectly stimulated chick biventer cervicis nerve-muscle preparation. This is Alpha-latrotoxin-Lh1a from Latrodectus hasselti (Redback spider).